Reading from the N-terminus, the 201-residue chain is Prostamide/prostaglandin F synthase (201 aa).

It belongs to the peroxiredoxin-like PRXL2 family. Prostamide/prostaglandin F synthase subfamily.

Its subcellular location is the cytoplasm. The protein localises to the cytosol. The enzyme catalyses prostaglandin H2 + [thioredoxin]-dithiol = prostaglandin F2alpha + [thioredoxin]-disulfide. It carries out the reaction prostamide F2alpha + [thioredoxin]-disulfide = prostamide H2 + [thioredoxin]-dithiol. Catalyzes the reduction of prostaglandin-ethanolamide H(2) (prostamide H(2)) to prostamide F(2alpha) with NADPH as proton donor. Also able to reduce prostaglandin H(2) to prostaglandin F(2alpha). In Aquarana catesbeiana (American bullfrog), this protein is Prostamide/prostaglandin F synthase (prxl2b).